The primary structure comprises 124 residues: Small ribosomal subunit protein uS13 (124 aa).

A disordered region spans residues 95 to 124; that stretch reads GLPVRGQRTKTNARTRKGPKRTIAGKKKAR.

It belongs to the universal ribosomal protein uS13 family. Part of the 30S ribosomal subunit. Forms a loose heterodimer with protein S19. Forms two bridges to the 50S subunit in the 70S ribosome.

Located at the top of the head of the 30S subunit, it contacts several helices of the 16S rRNA. In the 70S ribosome it contacts the 23S rRNA (bridge B1a) and protein L5 of the 50S subunit (bridge B1b), connecting the 2 subunits; these bridges are implicated in subunit movement. Contacts the tRNAs in the A and P-sites. This is Small ribosomal subunit protein uS13 from Mycobacteroides abscessus (strain ATCC 19977 / DSM 44196 / CCUG 20993 / CIP 104536 / JCM 13569 / NCTC 13031 / TMC 1543 / L948) (Mycobacterium abscessus).